Here is a 379-residue protein sequence, read N- to C-terminus: Glucose-1-phosphate adenylyltransferase (379 aa).

Alpha-D-glucose 1-phosphate is bound by residues G164, E179–K180, and S190.

Belongs to the bacterial/plant glucose-1-phosphate adenylyltransferase family. In terms of assembly, homotetramer.

The enzyme catalyses alpha-D-glucose 1-phosphate + ATP + H(+) = ADP-alpha-D-glucose + diphosphate. It functions in the pathway glycan biosynthesis; glycogen biosynthesis. Its function is as follows. Involved in the biosynthesis of ADP-glucose, a building block required for the elongation reactions to produce glycogen. Catalyzes the reaction between ATP and alpha-D-glucose 1-phosphate (G1P) to produce pyrophosphate and ADP-Glc. This chain is Glucose-1-phosphate adenylyltransferase, found in Lactiplantibacillus plantarum (strain ATCC BAA-793 / NCIMB 8826 / WCFS1) (Lactobacillus plantarum).